Consider the following 222-residue polypeptide: Ribonuclease T (222 aa).

The 175-residue stretch at Val20 to Phe194 folds into the Exonuclease domain. The Mg(2+) site is built by Asp23, Glu25, His181, and Asp186. His181 (proton donor/acceptor) is an active-site residue.

Belongs to the RNase T family. In terms of assembly, homodimer. Mg(2+) is required as a cofactor.

Functionally, trims short 3' overhangs of a variety of RNA species, leaving a one or two nucleotide 3' overhang. Responsible for the end-turnover of tRNA: specifically removes the terminal AMP residue from uncharged tRNA (tRNA-C-C-A). Also appears to be involved in tRNA biosynthesis. This Shewanella oneidensis (strain ATCC 700550 / JCM 31522 / CIP 106686 / LMG 19005 / NCIMB 14063 / MR-1) protein is Ribonuclease T.